The primary structure comprises 246 residues: Probable transcriptional regulatory protein HS_0508 (246 aa).

It belongs to the TACO1 family.

It localises to the cytoplasm. This Histophilus somni (strain 129Pt) (Haemophilus somnus) protein is Probable transcriptional regulatory protein HS_0508.